We begin with the raw amino-acid sequence, 386 residues long: Acyl-CoA ligase lcsD (386 aa).

The interval Glu-62 to Gln-132 is SBD1. Residue Ala-107–Lys-115 participates in ATP binding. Residues Gly-133–Tyr-195 form an SBD2 region. Thr-137 contributes to the substrate binding site. ATP-binding residues include Asp-216 and Arg-235. Residues Arg-243–Leu-245 and His-313–Gly-316 contribute to the CoA site. Residue Lys-331 participates in ATP binding. Residues Arg-352 to Asp-386 form a disordered region.

This sequence belongs to the ATP-dependent AMP-binding enzyme family.

It functions in the pathway secondary metabolite biosynthesis. Functionally, acyl-CoA ligase; part of the gene cluster that mediates the biosynthesis of the lipopeptide antibiotics leucinostatins that show extensive biological activities, including antimalarial, antiviral, antibacterial, antifungal, and antitumor activities, as well as phytotoxic. Leucinostatin A contains nine amino acid residues, including the unusual amino acid 4-methyl-L-proline (MePro), 2-amino-6-hydroxy-4-methyl-8-oxodecanoic acid (AHyMeOA), 3-hydroxyleucine (HyLeu), alpha-aminoisobutyric acid (AIB), beta-Ala, a 4-methylhex-2-enoic acid at the N-terminus as well as a N1,N1-dimethylpropane-1,2-diamine (DPD) at the C-terminus. The biosynthesis of leucinostatins is probably initiated with the assembly of 4-methylhex-2-enoic acid by a reducing PKS. Two reducing polyketide synthases, lcsB and lcsC, have been identified in the cluster and it is not clear which is the one that assembles 4-methylhex-2-enoic acid since both contain KS, AT, DH, cMT, ER, KR and ACP domains. The polyketide residue might be transferred to the NRPS lcsA, mediated by two additional enzymes, the acyl-CoA ligase lcsD and the thioesterase lcsE. The linear polyketide carboxylic acid, which is released from PKS, is converted to a CoA thioester by lcsD, and then lcsE hydrolyzes the thiol bond and shuttles the polyketide intermediate to lcsA. The C domain of the first module catalyzed the condensation of 4-methylhex-2-enoic acid and MePro carried by domain A1, followed by successive condensations of nine amino acids to trigger the elongation of the linear peptide. A5 and A6 domains of lcsA are proposed to incorporate leucine, A2 AHyMeOA, and A3 incorporates HyLeu. A4, A7 and A8 incorporate AIB. The AHyMeOA in leucinostatin A activated by the A2 might be produced by the second PKS (lcsB or lcsC) present within the cluster. The MePro is probably produced via leucine cyclization and may originate from a separate pathway, independent of the cluster. Another nonproteinogenic amino acid, beta-Ala, could be produced by an aspartic acid decarboxylase also localized outside of the cluster. Two candidates are VFPBJ_01400 and VFPBJ_10476. The final peptide scaffold may be released by the NAD(P)H-dependent thioester reductase (TE) at the C-terminal region of lcsA. Transamination of the lcsA product by the transaminase lcsP may produce DPD at the C-terminus. Further hydroxylation steps performed alternatively by the cytochrome P450 monooxygenases lcsI, lcsK and lcsN then yield the non-methylated leucinostatins precursor. It is also possible that leucines can be hydroxylated prior to their incorporation into the peptide. Varying extents of methylation then lead to the formation of leucinostatins A and B. This chain is Acyl-CoA ligase lcsD, found in Purpureocillium lilacinum (Paecilomyces lilacinus).